We begin with the raw amino-acid sequence, 139 residues long: Nucleoside diphosphate kinase (139 aa).

The ATP site is built by Lys-12, Phe-60, Arg-88, Thr-94, Arg-105, and Asn-115. The active-site Pros-phosphohistidine intermediate is His-118.

Belongs to the NDK family. In terms of assembly, homotetramer. Requires Mg(2+) as cofactor.

The protein resides in the cytoplasm. It catalyses the reaction a 2'-deoxyribonucleoside 5'-diphosphate + ATP = a 2'-deoxyribonucleoside 5'-triphosphate + ADP. The enzyme catalyses a ribonucleoside 5'-diphosphate + ATP = a ribonucleoside 5'-triphosphate + ADP. In terms of biological role, major role in the synthesis of nucleoside triphosphates other than ATP. The ATP gamma phosphate is transferred to the NDP beta phosphate via a ping-pong mechanism, using a phosphorylated active-site intermediate. The sequence is that of Nucleoside diphosphate kinase from Caldanaerobacter subterraneus subsp. tengcongensis (strain DSM 15242 / JCM 11007 / NBRC 100824 / MB4) (Thermoanaerobacter tengcongensis).